The primary structure comprises 395 residues: Major capsid protein P3 (395 aa).

As to quaternary structure, homotrimer.

It is found in the virion. In terms of biological role, major capsid protein self-assembles to form an icosahedral capsid with a pseudo T=25 symmetry, about 66 nm in diameter, and consisting of 240 capsid proteins trimers. The capsid encapsulates an inner membrane and the genomic dsDNA genome. The major coat protein P3 and two assembly factors (P10 and P17) are needed during the assembly of the virus particle inside the host cell, when the capsid protein multimers are capable of enclosing the host-derived membrane, containing the virus-encoded membrane-associated proteins. In Acinetobacter calcoaceticus (Arthrobacter siderocapsulatus), this protein is Major capsid protein P3 (III).